A 448-amino-acid polypeptide reads, in one-letter code: Asparagine--tRNA ligase (448 aa).

The protein belongs to the class-II aminoacyl-tRNA synthetase family. In terms of assembly, homodimer.

Its subcellular location is the cytoplasm. It catalyses the reaction tRNA(Asn) + L-asparagine + ATP = L-asparaginyl-tRNA(Asn) + AMP + diphosphate + H(+). In Streptococcus sanguinis (strain SK36), this protein is Asparagine--tRNA ligase.